The following is a 356-amino-acid chain: MTKPVADQSLQSLDARSRDIFRLIVESYLQRGEPVGSRNLSRLLPTQLSPATIRNVMSDLEHLGLIYAPHVSAGRLPTQQGLRFFVDAFMEVGDLSEEERRVIEAQIKASGRGQSLDHMLTEASQMLSGLSRGAGLVLAAKTEAPLKHIEFIQLEPRKALAILVSQNGDVENRVIELPAGVTASQLVEASNFLNAHIRGRTLAEAKSEMARLKEETREALDSLSQSLVEQGLAIWAGAESDTPARIIIRGRANLLENVTAQADLELLRHLFDDLETKEALIQLLGLAEEGPGVRIFIGSENKLFSLSGSSLIVAPYRDQDSRVIGALGIIGPTRLNYARIVPMVDYTAQLVGRLLR.

The protein belongs to the HrcA family.

Its function is as follows. Negative regulator of class I heat shock genes (grpE-dnaK-dnaJ and groELS operons). Prevents heat-shock induction of these operons. The chain is Heat-inducible transcription repressor HrcA from Chelativorans sp. (strain BNC1).